Reading from the N-terminus, the 483-residue chain is Regulatory protein ViaA (483 aa).

This sequence belongs to the ViaA family. As to quaternary structure, homodimer. Interacts with RavA.

It is found in the cytoplasm. In terms of biological role, component of the RavA-ViaA chaperone complex, which may act on the membrane to optimize the function of some of the respiratory chains. ViaA stimulates the ATPase activity of RavA. The sequence is that of Regulatory protein ViaA from Shigella flexneri serotype 5b (strain 8401).